Here is a 948-residue protein sequence, read N- to C-terminus: Receptor-like protein 45 (948 aa).

The N-terminal stretch at 1–26 (MSSSKLMDFGLTWIIMMMILLQGCRS) is a signal peptide. Topologically, residues 27 to 897 (CIESERQGLL…EDDDESGLLD (871 aa)) are extracellular. N-linked (GlcNAc...) asparagine glycans are attached at residues Asn-99 and Asn-113. LRR repeat units follow at residues 106–129 (FEEL…RKGG) and 135–162 (LRNL…AVSL). One copy of the LRR 3; degenerate repeat lies at 163–183 (KTLILHDNLFKGGFPVQELIN). Residue Asn-183 is glycosylated (N-linked (GlcNAc...) asparagine). LRR repeat units follow at residues 184–208 (LTSL…ELTN), 210–233 (RNLR…GICR), 234–257 (LEQL…CFSR), 258–284 (FSKL…DFKS), 286–306 (EYLS…LITE), 307–332 (LTEL…VSGG), 334–357 (QSQL…LWYQ), 358–381 (QELR…LLEN), 382–404 (NTEL…PRTM), 405–429 (RRLQ…GLIL), 430–453 (ASLR…MARM), 454–477 (ENIE…LFTG), 479–502 (YSLS…SSDE), 503–526 (TSLI…LLNL), 527–549 (RMLS…WLGN), 550–573 (FFLE…LFNI), 575–595 (YLWL…LRSS), 596–618 (SDYG…DTLW), 619–640 (YGLR…LFRS), 642–665 (PSIS…LCGL), 666–689 (SNVR…VTNL), 758–782 (LNQM…LGDL), 783–805 (KRVR…SFSN), 807–831 (RSIE…TLLQ), and 833–855 (LVVF…QFNT). A glycan (N-linked (GlcNAc...) asparagine) is linked at Asn-328. Asn-381 and Asn-392 each carry an N-linked (GlcNAc...) asparagine glycan. Residues Asn-436 and Asn-465 are each glycosylated (N-linked (GlcNAc...) asparagine). A glycan (N-linked (GlcNAc...) asparagine) is linked at Asn-608. 3 N-linked (GlcNAc...) asparagine glycosylation sites follow: Asn-653, Asn-679, and Asn-688. N-linked (GlcNAc...) asparagine glycosylation occurs at Asn-789. N-linked (GlcNAc...) asparagine glycans are attached at residues Asn-837 and Asn-842. Residues 898-918 (IVVLWWSLGTTYVTVMMGFLV) traverse the membrane as a helical segment. Residues 919–948 (FLCFDSPWRRAWFCLVDTFIDRVKDVLGVI) are Cytoplasmic-facing.

It belongs to the RLP family.

It localises to the cell membrane. The protein is Receptor-like protein 45 of Arabidopsis thaliana (Mouse-ear cress).